Consider the following 138-residue polypeptide: ATP synthase epsilon chain (138 aa).

Belongs to the ATPase epsilon chain family. F-type ATPases have 2 components, CF(1) - the catalytic core - and CF(0) - the membrane proton channel. CF(1) has five subunits: alpha(3), beta(3), gamma(1), delta(1), epsilon(1). CF(0) has three main subunits: a, b and c.

It is found in the cell membrane. In terms of biological role, produces ATP from ADP in the presence of a proton gradient across the membrane. This is ATP synthase epsilon chain (atpC) from Streptococcus mutans serotype c (strain ATCC 700610 / UA159).